We begin with the raw amino-acid sequence, 348 residues long: Dihydroorotase (348 aa).

Zn(2+) is bound by residues histidine 17 and histidine 19. Residues 19–21 (HLR) and asparagine 45 each bind substrate. Residues lysine 103, histidine 140, and histidine 178 each coordinate Zn(2+). Lysine 103 carries the post-translational modification N6-carboxylysine. Histidine 140 provides a ligand contact to substrate. Position 223 (leucine 223) interacts with substrate. Aspartate 251 contacts Zn(2+). The active site involves aspartate 251. 2 residues coordinate substrate: histidine 255 and alanine 267.

It belongs to the metallo-dependent hydrolases superfamily. DHOase family. Class II DHOase subfamily. In terms of assembly, homodimer. It depends on Zn(2+) as a cofactor.

It carries out the reaction (S)-dihydroorotate + H2O = N-carbamoyl-L-aspartate + H(+). It functions in the pathway pyrimidine metabolism; UMP biosynthesis via de novo pathway; (S)-dihydroorotate from bicarbonate: step 3/3. Its function is as follows. Catalyzes the reversible cyclization of carbamoyl aspartate to dihydroorotate. The chain is Dihydroorotase from Salmonella dublin (strain CT_02021853).